The following is a 290-amino-acid chain: UDP-N-acetylenolpyruvoylglucosamine reductase (290 aa).

Positions 20–187 constitute an FAD-binding PCMH-type domain; that stretch reads GVGGESEMWF…SRVRLKLRPS (168 aa). R167 is an active-site residue.

Belongs to the MurB family. Requires FAD as cofactor.

The protein resides in the cytoplasm. The enzyme catalyses UDP-N-acetyl-alpha-D-muramate + NADP(+) = UDP-N-acetyl-3-O-(1-carboxyvinyl)-alpha-D-glucosamine + NADPH + H(+). The protein operates within cell wall biogenesis; peptidoglycan biosynthesis. Cell wall formation. The chain is UDP-N-acetylenolpyruvoylglucosamine reductase from Deinococcus radiodurans (strain ATCC 13939 / DSM 20539 / JCM 16871 / CCUG 27074 / LMG 4051 / NBRC 15346 / NCIMB 9279 / VKM B-1422 / R1).